A 423-amino-acid chain; its full sequence is Protein CLP1 homolog (423 aa).

ATP is bound by residues Glu16, Lys57, and 119–124; that span reads DVGKST.

Belongs to the Clp1 family. Clp1 subfamily.

The protein localises to the nucleus. Required for endonucleolytic cleavage during polyadenylation-dependent pre-mRNA 3'-end formation. This Drosophila sechellia (Fruit fly) protein is Protein CLP1 homolog (cbc).